Reading from the N-terminus, the 323-residue chain is Glyoxylate/hydroxypyruvate reductase B (323 aa).

Residues Arg-237 and Glu-266 contribute to the active site. His-285 (proton donor) is an active-site residue.

This sequence belongs to the D-isomer specific 2-hydroxyacid dehydrogenase family. GhrB subfamily. As to quaternary structure, homodimer.

The protein localises to the cytoplasm. It catalyses the reaction glycolate + NADP(+) = glyoxylate + NADPH + H(+). The enzyme catalyses (R)-glycerate + NAD(+) = 3-hydroxypyruvate + NADH + H(+). The catalysed reaction is (R)-glycerate + NADP(+) = 3-hydroxypyruvate + NADPH + H(+). Its function is as follows. Catalyzes the NADPH-dependent reduction of glyoxylate and hydroxypyruvate into glycolate and glycerate, respectively. The polypeptide is Glyoxylate/hydroxypyruvate reductase B (Klebsiella pneumoniae (strain 342)).